Consider the following 316-residue polypeptide: UDP-N-acetyl-2-amino-2-deoxy-D-glucuronate oxidase (316 aa).

NAD(+)-binding positions include 11–13, 32–37, glutamate 55, 81–84, 101–102, glutamine 130, and 171–172; these read GYI, YDINDS, NYLH, EK, and WK.

This sequence belongs to the Gfo/Idh/MocA family. In terms of assembly, homotetramer.

The enzyme catalyses UDP-2-acetamido-2-deoxy-alpha-D-glucuronate + NAD(+) = UDP-2-acetamido-2-deoxy-alpha-D-ribo-hex-3-uluronate + NADH + H(+). It catalyses the reaction 2-hydroxyglutarate + NAD(+) = 2-oxoglutarate + NADH + H(+). The protein operates within bacterial outer membrane biogenesis; LPS O-antigen biosynthesis. Plays a role in the biosynthesis of B-band O antigen for serotype O5. Catalyzes the NAD-dependent oxidation of UDP-N-acetylglucosaminuronic acid (UDP-D-GlcNAcA) to UDP-2-acetamido-2-deoxy-3-oxo-D-glucuronic acid (UDP-3-oxo-D-GlcNAcA). Cannot use UDP-GlcNAc or UDP-GalNAc as the nucleotide sugar substrate, and can use only poorly UDP-D-glucuronic acid (UDP-GlcA). Undergoes an NAD(+) recycling mechanism using 2-oxoglutarate as an oxidant. The chain is UDP-N-acetyl-2-amino-2-deoxy-D-glucuronate oxidase from Pseudomonas aeruginosa (strain ATCC 15692 / DSM 22644 / CIP 104116 / JCM 14847 / LMG 12228 / 1C / PRS 101 / PAO1).